A 392-amino-acid chain; its full sequence is Succinate--CoA ligase [ADP-forming] subunit beta (392 aa).

The region spanning 9–248 is the ATP-grasp domain; that stretch reads KDILRKFGVA…ISEEDPFEVE (240 aa). ATP-binding positions include Lys-50, 57–59, Glu-103, Met-106, and Glu-111; that span reads GRG. Mg(2+)-binding residues include Asn-203 and Asp-217. Residues Asn-268 and 325 to 327 each bind substrate; that span reads GIV.

It belongs to the succinate/malate CoA ligase beta subunit family. In terms of assembly, heterotetramer of two alpha and two beta subunits. Requires Mg(2+) as cofactor.

The enzyme catalyses succinate + ATP + CoA = succinyl-CoA + ADP + phosphate. It carries out the reaction GTP + succinate + CoA = succinyl-CoA + GDP + phosphate. The protein operates within carbohydrate metabolism; tricarboxylic acid cycle; succinate from succinyl-CoA (ligase route): step 1/1. In terms of biological role, succinyl-CoA synthetase functions in the citric acid cycle (TCA), coupling the hydrolysis of succinyl-CoA to the synthesis of either ATP or GTP and thus represents the only step of substrate-level phosphorylation in the TCA. The beta subunit provides nucleotide specificity of the enzyme and binds the substrate succinate, while the binding sites for coenzyme A and phosphate are found in the alpha subunit. In Chlorobium phaeobacteroides (strain DSM 266 / SMG 266 / 2430), this protein is Succinate--CoA ligase [ADP-forming] subunit beta.